The chain runs to 381 residues: Probable peptidoglycan glycosyltransferase FtsW (381 aa).

The Cytoplasmic portion of the chain corresponds to 1 to 15 (MNNKKKIVKIFFYDK). A helical membrane pass occupies residues 16–36 (ILFFLLISLSIIGIIIVSSAS). Residues 37–53 (ISFGIRLHNDYFYFAKR) are Periplasmic-facing. The chain crosses the membrane as a helical span at residues 54 to 74 (NLLYFFLSFFLFFQIIRIPIN). At 75–81 (QLEKYNK) the chain is on the cytoplasmic side. A helical transmembrane segment spans residues 82 to 102 (IALLINLFLLIIVFIIGNSIN). The Periplasmic segment spans residues 103-109 (GAIRWIK). The chain crosses the membrane as a helical span at residues 110-130 (IGFFSIQPSECSKLILFFYIS). The Cytoplasmic segment spans residues 131 to 143 (DYIVKKNKELKNK). The chain crosses the membrane as a helical span at residues 144-164 (LWGFLKPIIIMLIFVILLLMQ). Residues 165-166 (PD) are Periplasmic-facing. 2 helical membrane-spanning segments follow: residues 167–187 (LGNS…AGIN) and 188–208 (LWKC…LIIF). The Periplasmic segment spans residues 209–278 (KPYRIRRILS…FSILGEELGY (70 aa)). The chain crosses the membrane as a helical span at residues 279 to 299 (IGSIIILIMLFFVIFRIFLIG). The Cytoplasmic segment spans residues 300–317 (KNSFIQKKFFSGYFSFSV). A helical transmembrane segment spans residues 318–338 (GIWISLQTIMNVGGVIGILPI). At 339 to 343 (KGLTL) the chain is on the periplasmic side. Residues 344–364 (PFISYGGSSLITIFSAIAIVI) traverse the membrane as a helical segment. Residues 365 to 381 (RSDFELRINKYQAYLKQ) lie on the Cytoplasmic side of the membrane.

The protein belongs to the SEDS family. FtsW subfamily.

It is found in the cell inner membrane. The catalysed reaction is [GlcNAc-(1-&gt;4)-Mur2Ac(oyl-L-Ala-gamma-D-Glu-L-Lys-D-Ala-D-Ala)](n)-di-trans,octa-cis-undecaprenyl diphosphate + beta-D-GlcNAc-(1-&gt;4)-Mur2Ac(oyl-L-Ala-gamma-D-Glu-L-Lys-D-Ala-D-Ala)-di-trans,octa-cis-undecaprenyl diphosphate = [GlcNAc-(1-&gt;4)-Mur2Ac(oyl-L-Ala-gamma-D-Glu-L-Lys-D-Ala-D-Ala)](n+1)-di-trans,octa-cis-undecaprenyl diphosphate + di-trans,octa-cis-undecaprenyl diphosphate + H(+). It functions in the pathway cell wall biogenesis; peptidoglycan biosynthesis. Peptidoglycan polymerase that is essential for cell division. The sequence is that of Probable peptidoglycan glycosyltransferase FtsW from Wigglesworthia glossinidia brevipalpis.